Consider the following 368-residue polypeptide: MSHVVRPILIILASVAIYTKYYLSFQNGFIDLLSTMGSQGSLAGLQDGLRSHYTGLDPLDKFLKACNVFFWPIFHGTSPALSLYAIAFAGSMIPMWLILLMHTCVKSSIVEIVMINALTGLLVQGIGPGVMMCVLLAMRSTSMEEFAVTSIPAVSILGPNDLPLSLVVCYILPLALSSLPAPASISVPSKQLFIASWQGWPLYIALAVGIAHSLRYGYRRSRPQQLFRHAYAFALACSIISHVGLLLISFLSIYPKSPFLSLHSADLHPQSLLVPRLPWQEVKITSLESGVLRFLHWDYSISSTGALLWCYDVYWEDRMRGKGWIAFFSLSSQLATMSLAFGPCSVALALYWTALSKNLMKNEHVRKR.

Transmembrane regions (helical) follow at residues 10–30 (IILA…NGFI), 81–101 (LSLY…ILLM), 118–138 (LTGL…LLAM), 192–212 (LFIA…GIAH), 233–253 (FALA…FLSI), and 334–354 (LATM…YWTA).

Belongs to the membrane-bound ascI terpene cyclase family.

It localises to the membrane. It functions in the pathway secondary metabolite biosynthesis. In terms of biological role, part of the gene cluster that mediates the biosynthesis of the indole diterpenes penitrems. The geranylgeranyl diphosphate (GGPP) synthase penG catalyzes the first step in penitrem biosynthesis via conversion of farnesyl pyrophosphate and isopentyl pyrophosphate into geranylgeranyl pyrophosphate (GGPP). Condensation of indole-3-glycerol phosphate with GGPP by the prenyl transferase penC then forms 3-geranylgeranylindole (3-GGI). Epoxidation by the FAD-dependent monooxygenase penM leads to a epoxidized-GGI that is substrate of the terpene cyclase penB for cyclization to yield paspaline. Paspaline is subsequently converted to 13-desoxypaxilline by the cytochrome P450 monooxygenase penP, the latter being then converted to paxilline by the cytochrome P450 monooxygenase penQ. Paxilline is converted to beta-paxitriol via C-10 ketoreduction by the short-chain dehydrogenase PC-15 which can be monoprenylated at the C-20 by the indole diterpene prenyltransferase penD. A two-step elimination (acetylation and elimination) process performed by the O-acetyltransferase PC-16 and the P.simplicissimum ptmI-ortholog not yet identified in P.crustosum, leads to the production of the prenylated form of penijanthine. The FAD-linked oxidoreductase ptmO then converts the prenylated form of penijanthine into PC-M5 which is in turn transformed into PC-M4 by the aromatic dimethylallyltransferase PC-22. A series of oxidation steps involving 4 cytochrome P450 monooxygenases (PC-21, PC-05, PC-23, PC-20) and a FAD-dependent monooxygenase (PC-14) are required for the transformation of PC-M4 to penitrems A and E. Synthesis of these final products is proposed to proceed via penitrems D and C (PC-21, PC-05, PC-14) and penitrems B and F (PC-21, PC-05, PC-14, PC-23). In Penicillium crustosum (Blue mold fungus), this protein is Terpene cyclase penA.